Here is a 162-residue protein sequence, read N- to C-terminus: Transcription antitermination protein NusB (162 aa).

Belongs to the NusB family.

In terms of biological role, involved in transcription antitermination. Required for transcription of ribosomal RNA (rRNA) genes. Binds specifically to the boxA antiterminator sequence of the ribosomal RNA (rrn) operons. The chain is Transcription antitermination protein NusB from Mycobacterium sp. (strain JLS).